Consider the following 319-residue polypeptide: MAFMSMERSTWAFTFGILGNLISLMVFLSPLPTFYRVYRKKSTEGFQSTPYVVTLFSCMLWMYYAFVKSGAELLVTINGVGCVIETVYLAMYLAYAPKSARMLTAKMLLGLNIGLFGVIALVTLLLSRGELRVHVLGWICVAVSLSVFAAPLSIIRLVIRTKSVEFMPFSLSFFLVLSAVIWFLYGLLKKDVFVALPNVLGFVFGVAQMALYMAYRSKKPLVASSSSAVVAAGLEIKLPEHVKEVQAVAKGAVAAAPEGRISCGAEVHPIDDVMPSEVVEVKVDDEETNRTDEMAGDGDHAMVRTEQIIKPDMAIVVEV.

At 1–10 (MAFMSMERST) the chain is on the extracellular side. Residues 11–31 (WAFTFGILGNLISLMVFLSPL) traverse the membrane as a helical segment. A MtN3/slv 1 domain is found at 13–99 (FTFGILGNLI…AMYLAYAPKS (87 aa)). Topologically, residues 32–50 (PTFYRVYRKKSTEGFQSTP) are cytoplasmic. Residues 51–71 (YVVTLFSCMLWMYYAFVKSGA) form a helical membrane-spanning segment. Residue E72 is a topological domain, extracellular. The helical transmembrane segment at 73–93 (LLVTINGVGCVIETVYLAMYL) threads the bilayer. At 94-106 (AYAPKSARMLTAK) the chain is on the cytoplasmic side. The chain crosses the membrane as a helical span at residues 107 to 127 (MLLGLNIGLFGVIALVTLLLS). The Extracellular segment spans residues 128-134 (RGELRVH). A helical membrane pass occupies residues 135–155 (VLGWICVAVSLSVFAAPLSII). The MtN3/slv 2 domain maps to 135 to 219 (VLGWICVAVS…ALYMAYRSKK (85 aa)). Topologically, residues 156-167 (RLVIRTKSVEFM) are cytoplasmic. The helical transmembrane segment at 168–188 (PFSLSFFLVLSAVIWFLYGLL) threads the bilayer. At 189–191 (KKD) the chain is on the extracellular side. A helical transmembrane segment spans residues 192-212 (VFVALPNVLGFVFGVAQMALY). Topologically, residues 213-319 (MAYRSKKPLV…KPDMAIVVEV (107 aa)) are cytoplasmic.

This sequence belongs to the SWEET sugar transporter family. In terms of assembly, forms homooligomers and/or heterooligomers.

It localises to the cell membrane. Its function is as follows. Mediates both low-affinity uptake and efflux of sugar across the plasma membrane. Functionally, confers blight susceptibility. Confers TAL effector-mediated susceptibility to Xanthomonas oryzae pv. oryzae. This is Bidirectional sugar transporter SWEET15 (SWEET15) from Oryza sativa subsp. japonica (Rice).